Consider the following 351-residue polypeptide: Protein Wnt-2b-A (351 aa).

The signal sequence occupies residues 1–16 (MHFAYILILLILTPRV). 11 disulfides stabilise this stretch: Cys67–Cys78, Cys118–Cys126, Cys128–Cys148, Cys197–Cys211, Cys199–Cys206, Cys269–Cys300, Cys285–Cys295, Cys299–Cys339, Cys315–Cys330, Cys317–Cys327, and Cys322–Cys323. Asn77 is a glycosylation site (N-linked (GlcNAc...) asparagine). A lipid anchor (O-palmitoleoyl serine; by PORCN) is attached at Ser203.

This sequence belongs to the Wnt family. Post-translationally, palmitoleoylation is required for efficient binding to frizzled receptors. Depalmitoleoylation leads to Wnt signaling pathway inhibition. In terms of tissue distribution, expressed maternally in both vegetal and animal blastomeres with enrichment in the animal hemisphere. Expressed zygotically near the prosencephalic-mesencephalic boundary of the developing brain in neurula and tailbud stages, and also in non-brain areas at tadpole stages.

It localises to the secreted. Its subcellular location is the extracellular space. The protein resides in the extracellular matrix. In terms of biological role, ligand for members of the frizzled family of seven transmembrane receptors. Functions in the canonical Wnt/beta-catenin signaling pathway. This Xenopus laevis (African clawed frog) protein is Protein Wnt-2b-A (wnt2b-a).